Reading from the N-terminus, the 276-residue chain is NH(3)-dependent NAD(+) synthetase (276 aa).

43–50 (GISGGVDS) contacts ATP. Position 49 (D49) interacts with Mg(2+). Residue R146 participates in deamido-NAD(+) binding. T166 contributes to the ATP binding site. E171 lines the Mg(2+) pocket. Deamido-NAD(+) is bound by residues K179 and D186. ATP contacts are provided by K195 and T217. 266-267 (HK) contacts deamido-NAD(+).

It belongs to the NAD synthetase family. As to quaternary structure, homodimer.

It carries out the reaction deamido-NAD(+) + NH4(+) + ATP = AMP + diphosphate + NAD(+) + H(+). Its pathway is cofactor biosynthesis; NAD(+) biosynthesis; NAD(+) from deamido-NAD(+) (ammonia route): step 1/1. Catalyzes the ATP-dependent amidation of deamido-NAD to form NAD. Uses ammonia as a nitrogen source. This chain is NH(3)-dependent NAD(+) synthetase, found in Vibrio cholerae serotype O1 (strain ATCC 39541 / Classical Ogawa 395 / O395).